The sequence spans 216 residues: Fucoxanthin-chlorophyll a-c binding protein C, chloroplastic (216 aa).

Residues 1–38 (MKSAIMAVASAAPGLRGPSAFNGAALTTSAKSSSAMKM) constitute a chloroplast transit peptide. 3 consecutive transmembrane segments (helical) span residues 80–100 (IAMLAIAGHLTQQNARLPGML), 121–141 (IPPGGLAQIFGFIGFLELAVM), and 182–202 (GRAAQMGILALMVHEELNNKP).

The protein belongs to the fucoxanthin chlorophyll protein family. In terms of assembly, the LHC complex of chromophytic algae is composed of fucoxanthin, chlorophyll A and C bound non-covalently by fucoxanthin chlorophyll proteins (FCPs). The ratio of pigments in this LHC is; fucoxanthin: chlorophyll C: chlorophyll A; (0.6-1): (0.1-0.3): (1).

It localises to the plastid. Its subcellular location is the chloroplast thylakoid membrane. Its function is as follows. The light-harvesting complex (LHC) functions as a light receptor, it captures and delivers excitation energy to photosystems with which it is closely associated. Energy is transferred from the carotenoid and chlorophyll C (or B) to chlorophyll A and the photosynthetic reaction centers where it is used to synthesize ATP and reducing power. This chain is Fucoxanthin-chlorophyll a-c binding protein C, chloroplastic (FCPC), found in Macrocystis pyrifera (Giant kelp).